A 214-amino-acid polypeptide reads, in one-letter code: Large ribosomal subunit protein uL3 (214 aa).

The span at 130–151 (FSSNRASHGNSRSHNTPGSIGQ) shows a compositional bias: polar residues. The tract at residues 130–163 (FSSNRASHGNSRSHNTPGSIGQAQDPGRVFPGKR) is disordered. Q153 is modified (N5-methylglutamine).

Belongs to the universal ribosomal protein uL3 family. In terms of assembly, part of the 50S ribosomal subunit. Forms a cluster with proteins L14 and L19. In terms of processing, methylated by PrmB.

In terms of biological role, one of the primary rRNA binding proteins, it binds directly near the 3'-end of the 23S rRNA, where it nucleates assembly of the 50S subunit. The sequence is that of Large ribosomal subunit protein uL3 from Chromobacterium violaceum (strain ATCC 12472 / DSM 30191 / JCM 1249 / CCUG 213 / NBRC 12614 / NCIMB 9131 / NCTC 9757 / MK).